The primary structure comprises 453 residues: Anthocyanidin 3-O-glucosyltransferase (453 aa).

The active-site Proton acceptor is His-17. His-17 contributes to the an anthocyanidin binding site. The active-site Charge relay is Asp-117. Thr-139 serves as a coordination point for UDP-alpha-D-glucose. His-148 contacts an anthocyanidin. Positions 331, 333, 348, 351, 352, 353, and 356 each coordinate UDP-alpha-D-glucose. Position 371 (Gly-371) interacts with an anthocyanidin. Residues Asp-372 and Gln-373 each contribute to the UDP-alpha-D-glucose site.

Belongs to the UDP-glycosyltransferase family.

It catalyses the reaction an anthocyanidin + UDP-alpha-D-glucose + H(+) = an anthocyanidin 3-O-beta-D-glucoside + UDP. The catalysed reaction is delphinidin + UDP-alpha-D-glucose = delphinidin 3-O-beta-D-glucoside + UDP. The enzyme catalyses pelargonidin + UDP-alpha-D-glucose = pelargonidin 3-O-beta-D-glucoside + UDP. It carries out the reaction cyanidin + UDP-alpha-D-glucose = cyanidin 3-O-beta-D-glucoside + UDP + H(+). The protein operates within pigment biosynthesis; anthocyanin biosynthesis. In terms of biological role, in the presence of other necessary color factors, this glycosylation reaction allows the accumulation of anthocyanin pigments. Anthocyanidins are the preferred substrates, while flavonols are only a minor substrate in vitro. In Gentiana triflora (Clustered gentian), this protein is Anthocyanidin 3-O-glucosyltransferase.